A 430-amino-acid chain; its full sequence is tRNA(Ile)-lysidine synthase (430 aa).

21–26 (SGGLDS) serves as a coordination point for ATP.

It belongs to the tRNA(Ile)-lysidine synthase family.

The protein localises to the cytoplasm. The enzyme catalyses cytidine(34) in tRNA(Ile2) + L-lysine + ATP = lysidine(34) in tRNA(Ile2) + AMP + diphosphate + H(+). In terms of biological role, ligates lysine onto the cytidine present at position 34 of the AUA codon-specific tRNA(Ile) that contains the anticodon CAU, in an ATP-dependent manner. Cytidine is converted to lysidine, thus changing the amino acid specificity of the tRNA from methionine to isoleucine. The chain is tRNA(Ile)-lysidine synthase from Salmonella typhimurium (strain LT2 / SGSC1412 / ATCC 700720).